Here is a 255-residue protein sequence, read N- to C-terminus: 5'-nucleotidase SurE (255 aa).

Positions 8, 9, 40, and 93 each coordinate a divalent metal cation.

This sequence belongs to the SurE nucleotidase family. The cofactor is a divalent metal cation.

The protein resides in the cytoplasm. The enzyme catalyses a ribonucleoside 5'-phosphate + H2O = a ribonucleoside + phosphate. In terms of biological role, nucleotidase that shows phosphatase activity on nucleoside 5'-monophosphates. This is 5'-nucleotidase SurE from Nitrobacter winogradskyi (strain ATCC 25391 / DSM 10237 / CIP 104748 / NCIMB 11846 / Nb-255).